The sequence spans 493 residues: Protein kinase PINOID 2 (493 aa).

The tract at residues Met-1 to Lys-53 is disordered. Over residues Ile-27–Asp-44 the composition is skewed to low complexity. Positions Phe-80 to Phe-443 constitute a Protein kinase domain. ATP is bound by residues Leu-86 to Val-94 and Lys-120. Catalysis depends on Asp-216, which acts as the Proton acceptor. The span at Gly-295–Gly-306 shows a compositional bias: gly residues. 2 disordered regions span residues Gly-295–Pro-320 and Glu-458–Phe-493. Positions Asp-307–Glu-319 are enriched in acidic residues. One can recognise an AGC-kinase C-terminal domain in the interval Lys-444–Phe-493. Residues Ser-474–Phe-493 show a composition bias toward basic and acidic residues.

It belongs to the protein kinase superfamily. Ser/Thr protein kinase family.

It catalyses the reaction L-seryl-[protein] + ATP = O-phospho-L-seryl-[protein] + ADP + H(+). The catalysed reaction is L-threonyl-[protein] + ATP = O-phospho-L-threonyl-[protein] + ADP + H(+). In terms of biological role, serine/threonine-protein kinase involved in the regulation of auxin signaling. The protein is Protein kinase PINOID 2 (PID2) of Oryza sativa subsp. japonica (Rice).